Consider the following 706-residue polypeptide: B-cell lymphoma 6 protein (706 aa).

Residues 32–99 enclose the BTB domain; that stretch reads TDVVIVVSRE…MYTSRLNLRE (68 aa). The tract at residues 317-349 is disordered; that stretch reads EPPNAPLNRKGLVSPQSPQKSDCQPNSPTESCS. Positions 330–349 are enriched in polar residues; the sequence is SPQSPQKSDCQPNSPTESCS. 2 positions are modified to phosphoserine; by MAPK1: S333 and S343. S361 carries the phosphoserine modification. The interval 376-379 is required for interaction with NuRD complex and for transcriptional repressor activity; the sequence is KKYK. An N6-acetyllysine modification is found at K379. At S404 the chain carries Phosphoserine. Residues 407 to 467 are disordered; sequence AYTAPPACQP…PRSSSESHSP (61 aa). Residues 424 to 456 show a composition bias toward polar residues; the sequence is DLQSPTKLSASGEDSTIPQASRLNNIVNRSMTG. Low complexity predominate over residues 457 to 466; it reads SPRSSSESHS. 6 C2H2-type zinc fingers span residues 518 to 541, 546 to 568, 574 to 596, 602 to 624, 630 to 652, and 658 to 681; these read FFCN…LQTH, YKCD…KTVH, YRCN…TRIH, YKCE…VLIH, YPCE…LRIH, and YHCE…RQKH.

In terms of assembly, homodimer. Interacts (via BTB domain) with the corepressors BCOR, NCOR1 and SMRT/NCOR2; the interactions are direct. Forms preferably ternary complexes with BCOR and SMRT/NCOR2 on target gene promoters but, on enhancer elements, interacts with SMRT/NCOR2 and HDAC3 to repress proximal gene expression. Interacts with histone deacetylases HDAC2, HDAC5 and HDAC9 (via the catalytic domain). Interacts with ZBTB7 and BCL6B. Interacts with SCF(FBXO11) complex; the interaction is independent of phosphorylation and promotes ubiquitination. Interacts (when phosphorylated) with PIN1; the interaction is required for BCL6 degradation upon genotoxic stress. Interacts with ZBTB17; inhibits ZBTB17 transcriptional activity. Interacts with CTBP1, autoinhibits its transcriptional expression. Interacts with NOTCH1 NCID and SIRT1; leads to a epigenetic repression of selective NOTCH1-target genes. Interacts (nor via BTB domain neither acetylated) with the NuRD complex components CHD4, HDAC1, MBD3 and MTA3; the interaction with MTA3 inhibits BCL6 acetylation and is required for BCL6 transpriptional repression. In terms of processing, phosphorylated by MAPK1 in response to antigen receptor activation at Ser-333 and Ser-343. Phosphorylated by ATM in response to genotoxic stress. Phosphorylation induces its degradation by ubiquitin/proteasome pathway. Post-translationally, polyubiquitinated. Polyubiquitinated by SCF(FBXO11), leading to its degradation by the proteasome. Ubiquitinated by the SCF(FBXL17) complex, leading to its degradation by the proteasome: ubiquitination by the SCF(FBXL17) complex takes place when aberrant BTB domain dimers are formed. Acetylated at Lys-379 by EP300 which inhibits the interaction with NuRD complex and the transcriptional repressor function. Deacetylated by HDAC- and SIR2-dependent pathways. As to expression, expressed in germinal center T- and B-cells and in primary immature dendritic cells.

It is found in the nucleus. Its function is as follows. Transcriptional repressor mainly required for germinal center (GC) formation and antibody affinity maturation which has different mechanisms of action specific to the lineage and biological functions. Forms complexes with different corepressors and histone deacetylases to repress the transcriptional expression of different subsets of target genes. Represses its target genes by binding directly to the DNA sequence 5'-TTCCTAGAA-3' (BCL6-binding site) or indirectly by repressing the transcriptional activity of transcription factors. In GC B-cells, represses genes that function in differentiation, inflammation, apoptosis and cell cycle control, also autoregulates its transcriptional expression and up-regulates, indirectly, the expression of some genes important for GC reactions, such as AICDA, through the repression of microRNAs expression, like miR155. An important function is to allow GC B-cells to proliferate very rapidly in response to T-cell dependent antigens and tolerate the physiological DNA breaks required for immunglobulin class switch recombination and somatic hypermutation without inducing a p53/TP53-dependent apoptotic response. In follicular helper CD4(+) T-cells (T(FH) cells), promotes the expression of T(FH)-related genes but inhibits the differentiation of T(H)1, T(H)2 and T(H)17 cells. Also required for the establishment and maintenance of immunological memory for both T- and B-cells. Suppresses macrophage proliferation through competition with STAT5 for STAT-binding motifs binding on certain target genes, such as CCL2 and CCND2. In response to genotoxic stress, controls cell cycle arrest in GC B-cells in both p53/TP53-dependedent and -independent manners. Besides, also controls neurogenesis through the alteration of the composition of NOTCH-dependent transcriptional complexes at selective NOTCH targets, such as HES5, including the recruitment of the deacetylase SIRT1 and resulting in an epigenetic silencing leading to neuronal differentiation. The chain is B-cell lymphoma 6 protein (BCL6) from Homo sapiens (Human).